We begin with the raw amino-acid sequence, 85 residues long: MKLLLLLTISASMLIEGLVNADGYIRGGDGCKVSCVINHVFCDNECKAAGGSYGYCWAWGLACWCEGLPADREWDYETDTCGGKK.

Residues 1–21 (MKLLLLLTISASMLIEGLVNA) form the signal peptide. The LCN-type CS-alpha/beta domain occupies 22-82 (DGYIRGGDGC…EWDYETDTCG (61 aa)). 4 disulfide bridges follow: C31–C81, C35–C56, C42–C63, and C46–C65. Position 82 is a glycine amide (G82).

Belongs to the long (4 C-C) scorpion toxin superfamily. Sodium channel inhibitor family. Beta subfamily. As to expression, expressed by the venom gland.

It localises to the secreted. Functionally, depressant insect beta-toxins cause a transient contraction paralysis followed by a slow flaccid paralysis. They bind voltage-independently at site-4 of sodium channels (Nav) and block action potentials, primarily by depolarizing the axonal membrane and suppressing the sodium current. This depressant toxin is active only on insects. It is found in a relatively small amount in the venom. This chain is Beta-insect depressant toxin Lqh-dprIT3e, found in Leiurus hebraeus (Hebrew deathstalker scorpion).